Here is a 255-residue protein sequence, read N- to C-terminus: 5-oxoprolinase subunit A (255 aa).

This sequence belongs to the LamB/PxpA family. In terms of assembly, forms a complex composed of PxpA, PxpB and PxpC.

It carries out the reaction 5-oxo-L-proline + ATP + 2 H2O = L-glutamate + ADP + phosphate + H(+). Its function is as follows. Catalyzes the cleavage of 5-oxoproline to form L-glutamate coupled to the hydrolysis of ATP to ADP and inorganic phosphate. This chain is 5-oxoprolinase subunit A, found in Thermococcus sibiricus (strain DSM 12597 / MM 739).